Reading from the N-terminus, the 480-residue chain is Immune evasion protein OPG047 (480 aa).

A BTB domain is found at 10–90; the sequence is CKNILALSMT…SYTGKVYIDS (81 aa). Residues 125 to 223 enclose the BACK domain; sequence CVECYMMGIE…NYLSPRGINN (99 aa). Kelch repeat units follow at residues 273-319, 320-363, 365-408, 410-447, and 448-480; these read VVYL…PANN, KLYV…SINN, IYVM…VFGR, LFLVGRNAEFYCESSNTWTLIDDPIYPRDNPELIIVDN, and KLLLIGGFYRGSYIDTIEVYNHHTYSWNIWDGK.

It belongs to the orthopoxvirus OPG047 family.

In terms of biological role, might have a role in the suppression of host immune response. In Vaccinia virus (strain Copenhagen) (VACV), this protein is Immune evasion protein OPG047 (OPG047).